We begin with the raw amino-acid sequence, 579 residues long: MMNLVLQYGLYILILVVLAIPLGNYIGKIMNGEKVFLSKILTPCENFIYKILHIDKDEDMSWKKYSFSVLAFSIISLIVLFLLHIFQGFLPLNPEKVSGTSWDLAFNNAISFVTNTNWQGYSGESSLSYFTQMMGLTVQNFVSAAVGISVLFALIRGFIRVKQKGIGNFWIDITRTVLYILIPLSIVVSLALVSQGVVQNFKQYETVSLLEPITLEDGTLVTEEVVPLGPAASQIAIKQLGTNGGGFMGTNSAHPIENPTILSNLFEMISLLLIPVALCFTFGRNIKDRRQGIAIFVAMGIMLVVAMAIVGVNEQIGTPQMALNGQVDLSTINQAGGNMEGKEARFGIATSSTWATFTTAASNGSVNSMHDSYTPIGGMIPMLLMQLGEVVFGGVGCGLYGMIGFAILAVFMAGLMVGRTPEYLGKKIEPFEMKMAVLVCLATPIAILIGSGIASILPETVNSLNNSGAHGFSEVLYAYTSAGGNNGSAFAGFAANTPFINISIGLSMIFARFVPMMGTLAIAGSMVKKKKVAESVGTLPTHNAMFIGLLIFVVLLIGALSFFPALALGPIAEFFQMLG.

The next 10 membrane-spanning stretches (helical) occupy residues 2-22 (MNLV…AIPL), 66-86 (SFSV…LHIF), 135-155 (GLTV…FALI), 177-197 (VLYI…SQGV), 260-280 (TILS…ALCF), 292-312 (GIAI…IVGV), 391-411 (VFGG…LAVF), 437-457 (VLVC…ASIL), 490-510 (FAGF…SMIF), and 546-566 (FIGL…FPAL).

This sequence belongs to the KdpA family. In terms of assembly, the system is composed of three essential subunits: KdpA, KdpB and KdpC.

It is found in the cell membrane. Functionally, part of the high-affinity ATP-driven potassium transport (or Kdp) system, which catalyzes the hydrolysis of ATP coupled with the electrogenic transport of potassium into the cytoplasm. This subunit binds the extracellular potassium ions and delivers the ions to the membrane domain of KdpB through an intramembrane tunnel. In Clostridium botulinum (strain Eklund 17B / Type B), this protein is Potassium-transporting ATPase potassium-binding subunit.